An 850-amino-acid polypeptide reads, in one-letter code: G-type lectin S-receptor-like serine/threonine-protein kinase CES101 (850 aa).

The N-terminal stretch at 1 to 22 (MWSNCIFLTLFTFYLFLGQSCC) is a signal peptide. At 23-423 (QTDTLLQGQY…IKGSKLAATW (401 aa)) the chain is on the extracellular side. In terms of domain architecture, Bulb-type lectin spans 24 to 144 (TDTLLQGQYL…DSDGSMKRTL (121 aa)). N-linked (GlcNAc...) asparagine glycosylation is found at asparagine 55, asparagine 118, asparagine 194, and asparagine 374. Positions 334–416 (CSRFGYTFRE…PRTIYIRIKG (83 aa)) constitute a PAN domain. 2 cysteine pairs are disulfide-bonded: cysteine 367/cysteine 390 and cysteine 371/cysteine 377. A helical transmembrane segment spans residues 424-444 (LVVVASLFLIIPVTWLIIYLV). The Cytoplasmic portion of the chain corresponds to 445–850 (LRKFKIKGTN…RVTITVMEAR (406 aa)). In terms of domain architecture, Protein kinase spans 527–816 (FSDANKLGEG…ALSLPKEPAF (290 aa)). ATP-binding positions include 533–541 (LGEGGFGPV) and lysine 555. Serine 561 bears the Phosphoserine mark. The interval 616–633 (LRKIVLDWKLRFRIMEGI) is caM-binding. Catalysis depends on aspartate 652, which acts as the Proton acceptor. Position 669 is a phosphoserine (serine 669). Residue threonine 686 is modified to Phosphothreonine. A phosphoserine mark is found at serine 730 and serine 838. Threonine 845 carries the phosphothreonine modification.

Belongs to the protein kinase superfamily. Ser/Thr protein kinase family. Mostly expressed in leaves, and, to a lower extent, in roots and flowers.

Its subcellular location is the cell membrane. It carries out the reaction L-seryl-[protein] + ATP = O-phospho-L-seryl-[protein] + ADP + H(+). The enzyme catalyses L-threonyl-[protein] + ATP = O-phospho-L-threonyl-[protein] + ADP + H(+). In terms of biological role, promotes the expression of genes involved in photosynthesis at least in dedifferentiated calli. In Arabidopsis thaliana (Mouse-ear cress), this protein is G-type lectin S-receptor-like serine/threonine-protein kinase CES101 (CES101).